Here is a 418-residue protein sequence, read N- to C-terminus: Putative competence-damage inducible protein (418 aa).

This sequence belongs to the CinA family.

This is Putative competence-damage inducible protein from Streptococcus pneumoniae (strain 70585).